Consider the following 1033-residue polypeptide: SIT4-associating protein SAP190 (1033 aa).

Disordered regions lie at residues 32–82 (DQDD…TTES), 147–213 (PEII…QVET), 768–813 (FGND…HDSG), and 828–1033 (ENEE…KEAF). Over residues 158–170 (ILIERDRKDKKED) the composition is skewed to basic and acidic residues. A compositionally biased stretch (acidic residues) spans 171–182 (AEEGGDSEETTN). The span at 183–195 (DSDHDSGDERSVD) shows a compositional bias: basic and acidic residues. Serine 774 is subject to Phosphoserine. Acidic residues-rich tracts occupy residues 784-793 (SEDIIGDTEG) and 828-838 (ENEEDYAEYSD). 3 positions are modified to phosphoserine: serine 857, serine 862, and serine 892. Positions 858 to 879 (DDGKSKSAESEFTDKISEHRDG) are enriched in basic and acidic residues. Over residues 909-924 (SRSQPSDPKLQDQNIF) the composition is skewed to polar residues. The segment covering 932-944 (GVGDDDDYMDPND) has biased composition (acidic residues). Phosphothreonine is present on threonine 990. Phosphoserine is present on serine 991. Acidic residues predominate over residues 1000 to 1018 (ISSDEEDSEDEDEENDMGN).

It belongs to the SAPS family. As to quaternary structure, associates with the SIT4 protein phosphatase catalytic subunit in a cell-cycle-dependent manner. Post-translationally, hyperphosphorylated in the absence of SIT4.

It localises to the cytoplasm. Functionally, positive regulator of protein phosphatase SIT4. Involved in the general amino acid control (GAAC) response regulated by TOR. Involved in the dephosphorylation of the elongator complex subunit IKI3. The protein is SIT4-associating protein SAP190 (SAP190) of Saccharomyces cerevisiae (strain AWRI1631) (Baker's yeast).